Here is a 261-residue protein sequence, read N- to C-terminus: UPF0177 protein YvdC (261 aa).

Transmembrane regions (helical) follow at residues 15 to 35, 43 to 63, 84 to 104, 123 to 143, 197 to 217, and 239 to 259; these read WVIV…IFHL, VLSI…VLFI, LDTV…YLIA, IIIG…FAQI, YFAF…TDLY, and FYLN…IALV.

This sequence belongs to the UPF0177 family.

The protein resides in the cell membrane. This is UPF0177 protein YvdC (yvdC) from Lactococcus lactis subsp. lactis (strain IL1403) (Streptococcus lactis).